We begin with the raw amino-acid sequence, 246 residues long: Probable transcriptional regulatory protein HD_0596 (246 aa).

This sequence belongs to the TACO1 family.

The protein localises to the cytoplasm. The sequence is that of Probable transcriptional regulatory protein HD_0596 from Haemophilus ducreyi (strain 35000HP / ATCC 700724).